The chain runs to 205 residues: Large ribosomal subunit protein uL4 (205 aa).

The segment at 45–97 (RQGTSAVKNRSAVRGGGKKPWRQKGTGRARQGSIRAPQWRGGGTVFGPTPRSY) is disordered. A compositionally biased stretch (basic residues) spans 60–71 (GGKKPWRQKGTG).

It belongs to the universal ribosomal protein uL4 family. As to quaternary structure, part of the 50S ribosomal subunit.

Functionally, one of the primary rRNA binding proteins, this protein initially binds near the 5'-end of the 23S rRNA. It is important during the early stages of 50S assembly. It makes multiple contacts with different domains of the 23S rRNA in the assembled 50S subunit and ribosome. In terms of biological role, forms part of the polypeptide exit tunnel. This Lactobacillus johnsonii (strain CNCM I-12250 / La1 / NCC 533) protein is Large ribosomal subunit protein uL4.